We begin with the raw amino-acid sequence, 422 residues long: Enolase (422 aa).

Glutamine 162 provides a ligand contact to (2R)-2-phosphoglycerate. Glutamate 204 functions as the Proton donor in the catalytic mechanism. Mg(2+) contacts are provided by aspartate 241, glutamate 284, and aspartate 311. The (2R)-2-phosphoglycerate site is built by lysine 336, arginine 365, serine 366, and lysine 387. Residue lysine 336 is the Proton acceptor of the active site.

Belongs to the enolase family. As to quaternary structure, component of the RNA degradosome, a multiprotein complex involved in RNA processing and mRNA degradation. Requires Mg(2+) as cofactor.

The protein resides in the cytoplasm. It is found in the secreted. It localises to the cell surface. It carries out the reaction (2R)-2-phosphoglycerate = phosphoenolpyruvate + H2O. Its pathway is carbohydrate degradation; glycolysis; pyruvate from D-glyceraldehyde 3-phosphate: step 4/5. In terms of biological role, catalyzes the reversible conversion of 2-phosphoglycerate (2-PG) into phosphoenolpyruvate (PEP). It is essential for the degradation of carbohydrates via glycolysis. The chain is Enolase from Legionella pneumophila (strain Lens).